The following is a 239-amino-acid chain: MEIRWLGHSAFEIITDEGLNILIDPFISNNPACQIPVEEFNPDIILVTHGHSDHLGDAMELSNKNNVPVAAIHEISLFLSKQGINNIGVNIGGSFIYRGVKFTMLDAKHSSVLDIVEEPLPAGDAASFLITLEDGTKLFHAGDTGLFGDMKTIIGEIYKPDIALLPIGDKFTMGPFEAALATRWIDSKVAIPMHYNTFPPIEQDPSIYANFVSQLNPNIDVVILNPGEYFEYNPENYQD.

Belongs to the UPF0173 family.

In Methanobrevibacter smithii (strain ATCC 35061 / DSM 861 / OCM 144 / PS), this protein is UPF0173 metal-dependent hydrolase Msm_0779.